We begin with the raw amino-acid sequence, 956 residues long: GAS2-like protein 2B (956 aa).

The Calponin-homology (CH) domain occupies 23 to 150; it reads YAMKEDLAEW…CLLELARRAS (128 aa). The region spanning 191-263 is the GAR domain; that stretch reads CDFKNLDQMV…HYLDKHDPCH (73 aa). Polar residues-rich tracts occupy residues 332–353 and 381–390; these read SSSYSLDDNENSPSFKNSQTPP and DPQQLGNPQS. 4 disordered regions span residues 332–361, 378–406, 853–885, and 914–956; these read SSSYSLDDNENSPSFKNSQTPPNDRRSMSI, DTQDPQQLGNPQSGHYRHHHSTSSLASQL, RPKIRPRRDNRPEKKPSRIPTPVSYRQVPSRNN, and VNSE…ESWV. A compositionally biased stretch (basic and acidic residues) spans 859–868; it reads RRDNRPEKKP.

It belongs to the GAS2 family.

It localises to the cytoplasm. It is found in the cytoskeleton. The protein resides in the cilium basal body. Its function is as follows. Together with gas2l2.L, regulates ciliary orientation and performance. The chain is GAS2-like protein 2B from Xenopus laevis (African clawed frog).